The primary structure comprises 172 residues: ATP synthase subunit b (172 aa).

Residues 18 to 38 traverse the membrane as a helical segment; that stretch reads IVWSLIILVIVAVFFYKFFMP.

The protein belongs to the ATPase B chain family. As to quaternary structure, F-type ATPases have 2 components, F(1) - the catalytic core - and F(0) - the membrane proton channel. F(1) has five subunits: alpha(3), beta(3), gamma(1), delta(1), epsilon(1). F(0) has three main subunits: a(1), b(2) and c(10-14). The alpha and beta chains form an alternating ring which encloses part of the gamma chain. F(1) is attached to F(0) by a central stalk formed by the gamma and epsilon chains, while a peripheral stalk is formed by the delta and b chains.

The protein localises to the cell membrane. In terms of biological role, f(1)F(0) ATP synthase produces ATP from ADP in the presence of a proton or sodium gradient. F-type ATPases consist of two structural domains, F(1) containing the extramembraneous catalytic core and F(0) containing the membrane proton channel, linked together by a central stalk and a peripheral stalk. During catalysis, ATP synthesis in the catalytic domain of F(1) is coupled via a rotary mechanism of the central stalk subunits to proton translocation. Functionally, component of the F(0) channel, it forms part of the peripheral stalk, linking F(1) to F(0). This chain is ATP synthase subunit b, found in Bifidobacterium longum (strain DJO10A).